A 380-amino-acid chain; its full sequence is Alkanesulfonate monooxygenase (380 aa).

Belongs to the SsuD family. Homotetramer.

It carries out the reaction an alkanesulfonate + FMNH2 + O2 = an aldehyde + FMN + sulfite + H2O + 2 H(+). In terms of biological role, catalyzes the desulfonation of aliphatic sulfonates. This chain is Alkanesulfonate monooxygenase, found in Pectobacterium carotovorum subsp. carotovorum (strain PC1).